We begin with the raw amino-acid sequence, 413 residues long: MPTIYRRKTPVVRIGDVWVGSDAPVVVQSMTNTDTADVDSTIKQCIALARAGSELIRVTVNNDDAAKGVPHLVDGLAKIGIHTPIIGDFHYNGHILLKKYPDCAKALAKYRINPGNVSIGRKDDDNFKAMVDVAVENQKPVRIGVNWGSLDQQLLAKMMDQNAKLAEPKEARDVMMEAMIVSALNSAAIAERYGLRKDQIILSAKVSGVQDLIDVYRDLAKRCDYVLHLGLTEAGMGAKGVVASTAGLSVLLLEGIGDTIRVSLTPKPNGDRTEEVLVAQQILQSMAIRSFTPQVTACPGCGRTTSTFFQELAERIQNYIREQMPQWKTRYTGVEEMKVAVMGCVVNGPGESKHANIGISLPGTFEEPKAPVYVDGRLMTTLKGDKIVEEFTTILNEYVDNRYAKKAEEAVGV.

Cysteine 298, cysteine 301, cysteine 344, and glutamate 351 together coordinate [4Fe-4S] cluster.

Belongs to the IspG family. The cofactor is [4Fe-4S] cluster.

The catalysed reaction is (2E)-4-hydroxy-3-methylbut-2-enyl diphosphate + oxidized [flavodoxin] + H2O + 2 H(+) = 2-C-methyl-D-erythritol 2,4-cyclic diphosphate + reduced [flavodoxin]. It functions in the pathway isoprenoid biosynthesis; isopentenyl diphosphate biosynthesis via DXP pathway; isopentenyl diphosphate from 1-deoxy-D-xylulose 5-phosphate: step 5/6. Functionally, converts 2C-methyl-D-erythritol 2,4-cyclodiphosphate (ME-2,4cPP) into 1-hydroxy-2-methyl-2-(E)-butenyl 4-diphosphate. The chain is 4-hydroxy-3-methylbut-2-en-1-yl diphosphate synthase (flavodoxin) from Koribacter versatilis (strain Ellin345).